Reading from the N-terminus, the 218-residue chain is Adenylate kinase (218 aa).

12-17 (GAGKGT) provides a ligand contact to ATP. The segment at 32-61 (STGDIFRKNISENTPLGIEAKSYMDNGQLV) is NMP. AMP is bound by residues threonine 33, arginine 38, 59–61 (QLV), 87–90 (GFPR), and glutamine 94. The LID stretch occupies residues 128-165 (GRRVCPSCGASYHIKFNPPTNDGKCDLCGSDVIQRKDD). Arginine 129 is an ATP binding site. Cysteine 132 and cysteine 135 together coordinate Zn(2+). ATP is bound at residue 138 to 139 (SY). Residues cysteine 152 and cysteine 155 each coordinate Zn(2+). 2 residues coordinate AMP: arginine 162 and arginine 173. Glutamine 201 is a binding site for ATP.

It belongs to the adenylate kinase family. Monomer.

The protein localises to the cytoplasm. It catalyses the reaction AMP + ATP = 2 ADP. Its pathway is purine metabolism; AMP biosynthesis via salvage pathway; AMP from ADP: step 1/1. Its function is as follows. Catalyzes the reversible transfer of the terminal phosphate group between ATP and AMP. Plays an important role in cellular energy homeostasis and in adenine nucleotide metabolism. The protein is Adenylate kinase of Clostridium perfringens (strain 13 / Type A).